The primary structure comprises 162 residues: Large ribosomal subunit protein uL15 (162 aa).

Residues Met1–Val44 form a disordered region. Over residues Arg21 to Val35 the composition is skewed to gly residues.

The protein belongs to the universal ribosomal protein uL15 family. As to quaternary structure, part of the 50S ribosomal subunit.

Binds to the 23S rRNA. In Rhodospirillum rubrum (strain ATCC 11170 / ATH 1.1.1 / DSM 467 / LMG 4362 / NCIMB 8255 / S1), this protein is Large ribosomal subunit protein uL15.